We begin with the raw amino-acid sequence, 310 residues long: MEDKIKHKLRIGWSYLLFLKQRVIHDRLTVSAGYMAYITLLSLVPLITVLLSVLSQFPVFSGAGDTVQAFVIQNFVPAASDAVEASLKEFISNTGKMTAVGSGFLFVASVMLISSIDRSLNYIWRVKKKRRPMYSFSLYWMILTLGPLLVGASLAATSYVTSLKIMDDEIVSSFYRTLLGWLPIILSFSAFVGLYLLVPNKKVRVTHALIGAMSAGCLFEFSKVGFAQYITQFPSYQVIYGALAAVPILFVWVYLCWIIVLIGAEITASLGEFEGWLAGKVSTNILESDIKALTEQQGLIESDSTDPESK.

6 helical membrane passes run 34 to 54, 97 to 117, 136 to 156, 178 to 198, 207 to 227, and 242 to 262; these read YMAY…LSVL, MTAV…SSID, FSLY…SLAA, LLGW…YLLV, HALI…VGFA, and ALAA…IVLI.

This sequence belongs to the UPF0761 family.

The protein resides in the cell inner membrane. The protein is UPF0761 membrane protein VFMJ11_0098 of Aliivibrio fischeri (strain MJ11) (Vibrio fischeri).